The primary structure comprises 79 residues: Ponericin-W-like 32.1 (79 aa).

Positions 1-23 are cleaved as a signal peptide; the sequence is MKCKKQLLVIFFAYFLVVNESEA. The propeptide occupies 49–79; that stretch reads RALMKRDLEDIMDPYQKNLKLDRYLRRLAMD.

The protein belongs to the non-disulfide-bridged peptide (NDBP) superfamily. Medium-length antimicrobial peptide (group 3) family. Ponericin-W subfamily. Expressed by the venom gland.

The protein resides in the secreted. It localises to the target cell membrane. Functionally, antimicrobial peptide with potent activity against a range of Gram-positive and Gram-negative bacteria. Has high hemolytic activity against erythrocytes. May act by disrupting the integrity of the bacterial cell membrane. The polypeptide is Ponericin-W-like 32.1 (Lychas mucronatus (Chinese swimming scorpion)).